Here is a 175-residue protein sequence, read N- to C-terminus: Endoribonuclease YbeY (175 aa).

Positions 129, 133, and 139 each coordinate Zn(2+).

Belongs to the endoribonuclease YbeY family. Zn(2+) is required as a cofactor.

It localises to the cytoplasm. Single strand-specific metallo-endoribonuclease involved in late-stage 70S ribosome quality control and in maturation of the 3' terminus of the 16S rRNA. The sequence is that of Endoribonuclease YbeY from Lactobacillus gasseri (strain ATCC 33323 / DSM 20243 / BCRC 14619 / CIP 102991 / JCM 1131 / KCTC 3163 / NCIMB 11718 / NCTC 13722 / AM63).